The chain runs to 774 residues: Fatty acid oxidation complex subunit alpha (774 aa).

Disordered regions lie at residues 1 to 31 (MSKENIVTRENTAVSENAVSEPTVNNDVGAS) and 617 to 641 (YLYSNPTKNSSPTKNGNSPAKRNSF). The interval 1–224 (MSKENIVTRE…KMGLVDDVVP (224 aa)) is enoyl-CoA hydratase. Composition is skewed to polar residues over residues 8-31 (TRENTAVSENAVSEPTVNNDVGAS) and 620-637 (SNPTKNSSPTKNGNSPAK). Positions 340 to 774 (RAIHRVGVLG…NIDEVTDVAS (435 aa)) are 3-hydroxyacyl-CoA dehydrogenase.

In the N-terminal section; belongs to the enoyl-CoA hydratase/isomerase family. It in the central section; belongs to the 3-hydroxyacyl-CoA dehydrogenase family. As to quaternary structure, heterotetramer of two alpha chains (FadJ) and two beta chains (FadI).

The protein localises to the cytoplasm. The enzyme catalyses a (3S)-3-hydroxyacyl-CoA = a (2E)-enoyl-CoA + H2O. It catalyses the reaction a 4-saturated-(3S)-3-hydroxyacyl-CoA = a (3E)-enoyl-CoA + H2O. The catalysed reaction is a (3S)-3-hydroxyacyl-CoA + NAD(+) = a 3-oxoacyl-CoA + NADH + H(+). It carries out the reaction (3S)-3-hydroxybutanoyl-CoA = (3R)-3-hydroxybutanoyl-CoA. Its pathway is lipid metabolism; fatty acid beta-oxidation. Functionally, catalyzes the formation of a hydroxyacyl-CoA by addition of water on enoyl-CoA. Also exhibits 3-hydroxyacyl-CoA epimerase and 3-hydroxyacyl-CoA dehydrogenase activities. In Yersinia pestis (strain Pestoides F), this protein is Fatty acid oxidation complex subunit alpha.